A 201-amino-acid chain; its full sequence is Probable molybdenum cofactor guanylyltransferase (201 aa).

GTP is bound by residues 16–18 (LAG), lysine 28, aspartate 75, and aspartate 107. Residue aspartate 107 participates in Mg(2+) binding.

This sequence belongs to the MobA family. It depends on Mg(2+) as a cofactor.

It localises to the cytoplasm. It catalyses the reaction Mo-molybdopterin + GTP + H(+) = Mo-molybdopterin guanine dinucleotide + diphosphate. Transfers a GMP moiety from GTP to Mo-molybdopterin (Mo-MPT) cofactor (Moco or molybdenum cofactor) to form Mo-molybdopterin guanine dinucleotide (Mo-MGD) cofactor. The chain is Probable molybdenum cofactor guanylyltransferase from Mycobacterium bovis (strain ATCC BAA-935 / AF2122/97).